A 496-amino-acid polypeptide reads, in one-letter code: Lysine--tRNA ligase (496 aa).

Glutamate 409 and glutamate 416 together coordinate Mg(2+).

This sequence belongs to the class-II aminoacyl-tRNA synthetase family. As to quaternary structure, homodimer. It depends on Mg(2+) as a cofactor.

It is found in the cytoplasm. The catalysed reaction is tRNA(Lys) + L-lysine + ATP = L-lysyl-tRNA(Lys) + AMP + diphosphate. The polypeptide is Lysine--tRNA ligase (Streptococcus gordonii (strain Challis / ATCC 35105 / BCRC 15272 / CH1 / DL1 / V288)).